Here is a 381-residue protein sequence, read N- to C-terminus: Spindlin interactor and repressor of chromatin-binding protein (381 aa).

A disordered region spans residues 42–73 (RVTQQEKTPPPRPSPLEAGSDGCEEPKQQVSW). Lys48 participates in a covalent cross-link: Glycyl lysine isopeptide (Lys-Gly) (interchain with G-Cter in SUMO2). Phosphoserine is present on residues Ser121 and Ser148. Disordered regions lie at residues 144-264 (AEQP…EVRH), 283-320 (QLRG…LRGT), and 339-381 (LQDW…GNGV). Residues Lys189 and Lys220 each participate in a glycyl lysine isopeptide (Lys-Gly) (interchain with G-Cter in SUMO2) cross-link. Residues 218–228 (RWKEPPGEEPV) are compositionally biased toward basic and acidic residues. Residues Ser248 and Ser251 each carry the phosphoserine modification. The segment covering 287–299 (PDSKDSPKDREVA) has biased composition (basic and acidic residues). Glycyl lysine isopeptide (Lys-Gly) (interchain with G-Cter in SUMO2) cross-links involve residues Lys290 and Lys294. Phosphoserine occurs at positions 308 and 310. Lys374 is covalently cross-linked (Glycyl lysine isopeptide (Lys-Gly) (interchain with G-Cter in SUMO2)).

Interacts with SPIN1, SPIN2A, SPIN2B, SPIN3 and SPIN4. Interacts with TCF7L2 in a SPIN1-dependent manner. Interacts with PARP1; promoting PARP1 ADP-ribosyltransferase activity.

Its subcellular location is the nucleus. The protein resides in the chromosome. Functionally, chromatin protein that stabilizes SPIN1 and enhances its association with histone H3 trimethylated at both 'Lys-4' and 'Lys-9' (H3K4me3K9me3). Positively regulates poly-ADP-ribosylation in response to DNA damage; acts by facilitating PARP1 ADP-ribosyltransferase activity. The sequence is that of Spindlin interactor and repressor of chromatin-binding protein from Homo sapiens (Human).